Here is an 84-residue protein sequence, read N- to C-terminus: Hirudin-HM2 (84 aa).

Positions 1 to 20 (MFSLKLFVVFLAVCICVSQA) are cleaved as a signal peptide. The tract at residues 21-23 (VSY) is interaction with thrombin active site. 3 disulfides stabilise this stretch: Cys-26–Cys-34, Cys-36–Cys-48, and Cys-42–Cys-57. The interval 53–84 (SGNQCVHGEGTPKPKSQTEGDFEEIPDEDILN) is disordered. The O-linked (GalNAc...) threonine glycan is linked to Thr-63. Residues 72–84 (GDFEEIPDEDILN) show a composition bias toward acidic residues. The segment at 73–84 (DFEEIPDEDILN) is interaction with fibrinogen-binding exosite of thrombin.

It belongs to the protease inhibitor I14 (hirudin) family.

It localises to the secreted. In terms of biological role, hirudin is a potent thrombin-specific protease inhibitor. It forms a stable non-covalent complex with alpha-thrombin, thereby abolishing its ability to cleave fibrinogen. The sequence is that of Hirudin-HM2 from Hirudinaria manillensis (Asian medical leech).